The chain runs to 723 residues: Nicastrin (723 aa).

An N-terminal signal peptide occupies residues Met-1–Cys-16. The Extracellular segment spans residues Asp-17–Asp-678. N-linked (GlcNAc...) asparagine glycans are attached at residues Asn-40, Asn-181, Asn-271, Asn-328, Asn-409, and Asn-627. A helical transmembrane segment spans residues Ala-679 to Ala-699. Over Val-700 to Leu-723 the chain is Cytoplasmic.

It belongs to the nicastrin family. Component of the gamma-secretase complex, a complex probably composed of the presenilin homodimer (sel-12, hop-1 or spe-4), nicastrin (aph-2), aph-1 and pen-2.

It is found in the membrane. Essential subunit of the gamma-secretase complex, an endoprotease complex that catalyzes the intramembrane cleavage of integral membrane proteins such as Notch (glp-1 or lin-12). It may represents a stabilizing cofactor required for the assembly of the gamma-secretase complex. This chain is Nicastrin (aph-2), found in Caenorhabditis elegans.